We begin with the raw amino-acid sequence, 260 residues long: Ribonuclease HII (260 aa).

Positions 73–260 (LHIAGIDEAG…APVQQQLDIV (188 aa)) constitute an RNase H type-2 domain. Residues D79, E80, and D171 each coordinate a divalent metal cation.

Belongs to the RNase HII family. The cofactor is Mn(2+). Mg(2+) serves as cofactor.

It is found in the cytoplasm. The catalysed reaction is Endonucleolytic cleavage to 5'-phosphomonoester.. Endonuclease that specifically degrades the RNA of RNA-DNA hybrids. This is Ribonuclease HII from Desulfitobacterium hafniense (strain DSM 10664 / DCB-2).